We begin with the raw amino-acid sequence, 610 residues long: Peptidyl-prolyl cis-trans isomerase 9 (610 aa).

The residue at position 13 (S13) is a Phosphoserine. 3 WD repeats span residues 45-83 (MHNAEIYKCFPTKSNYILSVSYDGYVKFWHKTPNGVEYI), 88-127 (AHNAMLLSAELSQDERLFITGADDKSLKVFDVESIDLVNI), and 177-216 (KHTAPVHCLRYLSTLDCFLSIDIGGMVEYWSPEEPFQKPD). The PPIase cyclophilin-type domain occupies 453–607 (LGKAAIIHTT…EPTKIINISI (155 aa)).

Belongs to the cyclophilin-type PPIase family.

It localises to the nucleus. It catalyses the reaction [protein]-peptidylproline (omega=180) = [protein]-peptidylproline (omega=0). Functionally, PPIases accelerate the folding of proteins. It catalyzes the cis-trans isomerization of proline imidic peptide bonds in oligopeptides. This Schizosaccharomyces pombe (strain 972 / ATCC 24843) (Fission yeast) protein is Peptidyl-prolyl cis-trans isomerase 9 (cyp9).